We begin with the raw amino-acid sequence, 270 residues long: Putative hydro-lyase H16_B1759 (270 aa).

Belongs to the D-glutamate cyclase family.

This chain is Putative hydro-lyase H16_B1759, found in Cupriavidus necator (strain ATCC 17699 / DSM 428 / KCTC 22496 / NCIMB 10442 / H16 / Stanier 337) (Ralstonia eutropha).